We begin with the raw amino-acid sequence, 261 residues long: tRNA pseudouridine synthase A (261 aa).

D51 (nucleophile) is an active-site residue. Y109 lines the substrate pocket.

The protein belongs to the tRNA pseudouridine synthase TruA family. Homodimer.

It catalyses the reaction uridine(38/39/40) in tRNA = pseudouridine(38/39/40) in tRNA. Its function is as follows. Formation of pseudouridine at positions 38, 39 and 40 in the anticodon stem and loop of transfer RNAs. The protein is tRNA pseudouridine synthase A of Shewanella pealeana (strain ATCC 700345 / ANG-SQ1).